Reading from the N-terminus, the 414-residue chain is L-cysteine:1D-myo-inositol 2-amino-2-deoxy-alpha-D-glucopyranoside ligase (414 aa).

Cysteine 43 contributes to the Zn(2+) binding site. L-cysteinyl-5'-AMP contacts are provided by residues 43 to 46 (CGIT), threonine 58, and 81 to 83 (NIT). The 'HIGH' region motif lies at 45 to 55 (ITPYDATHLGH). The 'ERGGDP' region signature appears at 189 to 194 (ERGGDP). Tryptophan 229 is a binding site for L-cysteinyl-5'-AMP. Residue cysteine 233 coordinates Zn(2+). 251–253 (GSD) serves as a coordination point for L-cysteinyl-5'-AMP. A Zn(2+)-binding site is contributed by histidine 258. Isoleucine 285 lines the L-cysteinyl-5'-AMP pocket. A 'KMSKS' region motif is present at residues 291 to 295 (KMSKS).

The protein belongs to the class-I aminoacyl-tRNA synthetase family. MshC subfamily. In terms of assembly, monomer. Requires Zn(2+) as cofactor.

It catalyses the reaction 1D-myo-inositol 2-amino-2-deoxy-alpha-D-glucopyranoside + L-cysteine + ATP = 1D-myo-inositol 2-(L-cysteinylamino)-2-deoxy-alpha-D-glucopyranoside + AMP + diphosphate + H(+). In terms of biological role, catalyzes the ATP-dependent condensation of GlcN-Ins and L-cysteine to form L-Cys-GlcN-Ins. The chain is L-cysteine:1D-myo-inositol 2-amino-2-deoxy-alpha-D-glucopyranoside ligase (mshC) from Mycobacterium bovis (strain ATCC BAA-935 / AF2122/97).